Consider the following 612-residue polypeptide: E3 ubiquitin-protein ligase synoviolin (612 aa).

The Cytoplasmic segment spans residues 1 to 4 (MFRT). The segment at 1–251 (MFRTAVMMAA…LFAIRPMYLA (251 aa)) is involved in FAM8A1 interaction. A helical transmembrane segment spans residues 5-25 (AVMMAASLALTGAVVAHAYYL). An interaction with SEL1L region spans residues 21 to 42 (HAYYLKHQFYPTVVYLTKSSPS). Residues 26-41 (KHQFYPTVVYLTKSSP) are Lumenal-facing. Residues 42–62 (SMAVLYIQAFVLVFLLGKVMG) traverse the membrane as a helical segment. Over 63-98 (KVFFGQLRAAEMEHLLERSWYAVTETCLAFTVFRDD) the chain is Cytoplasmic. Residues 99–119 (FSPRFVALFTLLLFLKCFHWL) form a helical membrane-spanning segment. Topologically, residues 120-140 (AEDRVDFMERSPNISWLFHCR) are lumenal. A helical transmembrane segment spans residues 141-161 (IVSLMFLLGILDFLFVSHAYH). Over 162 to 169 (SILTRGAS) the chain is Cytoplasmic. A helical transmembrane segment spans residues 170 to 190 (VQLVFGFEYAILMTMVLTIFI). Residues 191 to 224 (KYVLHSVDLQSENPWDNKAVYMLYTELFTGFIKV) lie on the Lumenal side of the membrane. A helical membrane pass occupies residues 225-245 (LLYMAFMTIMIKVHTFPLFAI). Positions 236 to 270 (KVHTFPLFAIRPMYLAMRQFKKAVTDAIMSRRAIR) are interaction with p53/TP53. Over 246–612 (RPMYLAMRQF…LQKLESPVAH (367 aa)) the chain is Cytoplasmic. The Zn(2+) site is built by Cys291, Cys294, Cys307, His309, His312, Cys315, Cys326, and Cys329. The RING-type; atypical zinc-finger motif lies at 291 to 330 (CIICREEMVTGAKRLPCNHIFHTSCLRSWFQRQQTCPTCR). 2 disordered regions span residues 337–375 (SLPAQSPPPPEPADQGPPPAPHPQPLLPQPPNFPQGLLP) and 393–449 (PVPP…PGFP). 2 stretches are compositionally biased toward pro residues: residues 341 to 375 (QSPPPPEPADQGPPPAPHPQPLLPQPPNFPQGLLP) and 393 to 409 (PVPPPPSSGEAAAPPPT). Positions 416–434 (PSGAATTTAAGTSTSAPAP) are enriched in low complexity. Residues 435-449 (GSVPGPEAGPAPGFP) are compositionally biased toward pro residues. The segment at 474-529 (GFAGLTPEELRALEGHERQHLEARLQSLRNIHTLLDAAMLQINQYLTVLASLGPPR) is HAF-H domain; necessary to form higher-order Hrd1 complexes. Residues 530–612 (PATSVNPTEE…LQKLESPVAH (83 aa)) are disordered. Positions 539–559 (ETASTVVSAAPSTSAPSSEAP) are enriched in low complexity. Positions 560–570 (TPSPGASPPIP) are enriched in pro residues. Over residues 586–595 (ELPEDGEPDA) the composition is skewed to acidic residues. At Ser608 the chain carries Phosphoserine.

Belongs to the HRD1 family. In terms of assembly, homodimer. Interacts with p53/TP53. Interacts with HTT. Component of the HRD1 complex, which comprises at least SYNV1/HRD1, DERL1/2, FAM8A1, HERPUD1/HERP, OS9, SEL1L and UBE2J1. FAM8A1 is stabilized by interaction with SYNV1, which prevents its proteasomal degradation. OS9 and UBE2J1 recruitment to the complex may be mediated by SEL1L. SYNV1 assembles with SEL1L and FAM8A1 through its transmembrane domains, but interaction with its cytoplasmic domain is required to confer stability to FAM8A1 and enhance recruitment of HERPUD1. The HRD1 complex also associates with VIMP and may transfer misfolded proteins from the endoplasmic reticulum to VCP. May form a complex with ERLEC1; HSPA5; OS9 and SEL1L. Interacts with VCP. Interacts with UBXN6. Interacts with BAG6. Interacts with NFE2L1. Interacts (via N-terminus) with components of the pre-B cell receptor, including IGLL1 and VPREB1A. Interacts with CREB3L3; this interaction leads to CREB3L3 ubiquitination and proteasomal degradation. Auto-ubiquitinated. Deubiquitinated by USP19. In terms of tissue distribution, widely expressed, with highest levels in bone, spleen, lung and testis. In the brain, present in neurons but not in glial cells. Up-regulated in synovial tissues from mice with collagen-induced arthritis (at protein level). Expressed in the liver.

The protein resides in the endoplasmic reticulum membrane. The enzyme catalyses S-ubiquitinyl-[E2 ubiquitin-conjugating enzyme]-L-cysteine + [acceptor protein]-L-lysine = [E2 ubiquitin-conjugating enzyme]-L-cysteine + N(6)-ubiquitinyl-[acceptor protein]-L-lysine.. The protein operates within protein modification; protein ubiquitination. Its function is as follows. E3 ubiquitin-protein ligase which accepts ubiquitin specifically from endoplasmic reticulum-associated UBC7 E2 ligase and transfers it to substrates, promoting their degradation. Component of the endoplasmic reticulum quality control (ERQC) system also called ER-associated degradation (ERAD) involved in ubiquitin-dependent degradation of misfolded endoplasmic reticulum proteins. Also promotes the degradation of normal but naturally short-lived proteins such as SGK. Protects cells from ER stress-induced apoptosis. Sequesters p53/TP53 in the cytoplasm and promotes its degradation, thereby negatively regulating its biological function in transcription, cell cycle regulation and apoptosis. Required for embryogenesis. Mediates the ubiquitination and subsequent degradation of cytoplasmic NFE2L1. During the early stage of B cell development, required for degradation of the pre-B cell receptor (pre-BCR) complex, hence supporting further differentiation into mature B cells. This chain is E3 ubiquitin-protein ligase synoviolin (Syvn1), found in Mus musculus (Mouse).